We begin with the raw amino-acid sequence, 147 residues long: Lysozyme C, intestinal isozyme (147 aa).

An N-terminal signal peptide occupies residues 1 to 18; that stretch reads MKAVLILGLLLLSVTVQG. The C-type lysozyme domain occupies 19 to 147; the sequence is KKFEKCELAR…VSSYIRGCKL (129 aa). 4 cysteine pairs are disulfide-bonded: cysteine 24–cysteine 145, cysteine 48–cysteine 133, cysteine 83–cysteine 99, and cysteine 95–cysteine 113. Residues glutamate 53 and aspartate 71 contribute to the active site.

This sequence belongs to the glycosyl hydrolase 22 family.

It catalyses the reaction Hydrolysis of (1-&gt;4)-beta-linkages between N-acetylmuramic acid and N-acetyl-D-glucosamine residues in a peptidoglycan and between N-acetyl-D-glucosamine residues in chitodextrins.. Functionally, lysozymes have primarily a bacteriolytic function; those in tissues and body fluids are associated with the monocyte-macrophage system and enhance the activity of immunoagents. The chain is Lysozyme C, intestinal isozyme from Bos taurus (Bovine).